Reading from the N-terminus, the 442-residue chain is Syndecan-3 (442 aa).

2 disordered regions span residues 1–25 (MKPG…APGA) and 47–80 (RWRN…YSGS). The signal sequence occupies residues 1 to 44 (MKPGPPRRGTAQGQRVDTATHAPGARGLLLPPLLLLLLAGRAAG). Residues 45–387 (AQRWRNENFE…SILERKEVLV (343 aa)) are Extracellular-facing. The segment covering 48–58 (WRNENFERPVD) has biased composition (basic and acidic residues). Residues 61 to 75 (GSGDDDSFPDDELDD) show a composition bias toward acidic residues. Ser-78, Ser-80, Ser-82, and Ser-89 each carry an O-linked (Xyl...) (glycosaminoglycan) serine glycan. Thr-107 is a glycosylation site (O-linked (GalNAc) threonine; by GALNT13). Disordered regions lie at residues 152–199 (ESSQ…PATA), 253–293 (ATSR…AQTP), and 305–327 (EPEV…TTQP). Low complexity-rich tracts occupy residues 157 to 199 (ATTI…PATA) and 276 to 287 (TLPLGTTAPGPT). O-linked (GalNAc) serine; by GALNT13 glycosylation is present at Ser-161. Residues Thr-162, Thr-163, Thr-170, and Thr-172 are each glycosylated (O-linked (GalNAc) threonine; by GALNT13). Ser-315 and Ser-367 each carry an O-linked (Xyl...) (glycosaminoglycan) serine glycan. A helical membrane pass occupies residues 388 to 408 (AVIVGGVVGALFAAFLVTLLI). 4 positions are modified to phosphotyrosine: Tyr-409, Tyr-419, Tyr-431, and Tyr-441. Residues 409–442 (YRMKKKDEGSYTLEEPKQASVTYQKPDKQEEFYA) lie on the Cytoplasmic side of the membrane. The segment at 419-442 (YTLEEPKQASVTYQKPDKQEEFYA) is disordered. Positions 433–442 (KPDKQEEFYA) are enriched in basic and acidic residues.

The protein belongs to the syndecan proteoglycan family. Interacts with TIAM1. Interacts with PTN (via heparan sulfate chains); this interaction mediates the neurite outgrowth-promoting signal from PTN to the cytoskeleton of growing neurites; this interaction mediates osteoblast recruitment. Interacts with MDK; this interaction induces SDC3 clustering; this interaction induces neuronal cell adhesion and neurite outgrowth. Post-translationally, O-glycosylated within the Thr/Ser-rich region which could interact with lectin domains on other molecules.

The protein localises to the cell membrane. Functionally, cell surface proteoglycan that may bear heparan sulfate. May have a role in the organization of cell shape by affecting the actin cytoskeleton, possibly by transferring signals from the cell surface in a sugar-dependent mechanism. The polypeptide is Syndecan-3 (Sdc3) (Mus musculus (Mouse)).